The sequence spans 215 residues: Peroxiredoxin 1 (215 aa).

One can recognise a Thioredoxin domain in the interval Val-2 to Val-158. Cys-46 functions as the Cysteine sulfenic acid (-SOH) intermediate in the catalytic mechanism. Position 121 (Arg-121) interacts with substrate.

This sequence belongs to the peroxiredoxin family. Prx6 subfamily. In terms of assembly, homodecamer. Pentamer of dimers that assemble into a ring structure.

The protein resides in the cytoplasm. The catalysed reaction is a hydroperoxide + [thioredoxin]-dithiol = an alcohol + [thioredoxin]-disulfide + H2O. In terms of biological role, thiol-specific peroxidase that catalyzes the reduction of hydrogen peroxide and organic hydroperoxides to water and alcohols, respectively. Plays a role in cell protection against oxidative stress by detoxifying peroxides. The protein is Peroxiredoxin 1 of Sulfurisphaera tokodaii (strain DSM 16993 / JCM 10545 / NBRC 100140 / 7) (Sulfolobus tokodaii).